The sequence spans 282 residues: Serine/threonine-protein kinase Aurora-2 (282 aa).

Residues 19–270 (FDIGKPLGRG…LHKLLEHPWI (252 aa)) enclose the Protein kinase domain. Residues 25–33 (LGRGKFGHV) and K48 contribute to the ATP site. Residue D142 is the Proton acceptor of the active site. S164 bears the Phosphoserine mark. The residue at position 173 (T173) is a Phosphothreonine.

The protein belongs to the protein kinase superfamily. Ser/Thr protein kinase family. Aurora subfamily. In terms of processing, phosphorylation at Thr-173 may regulate activity and degradation of AUR2 in a cell cycle dependent manner. Abundant in roots, flowers and flower buds, low or absent in expanded leaves, stems and siliques.

It localises to the nucleus membrane. The protein localises to the cytoplasm. The protein resides in the cytoskeleton. Its subcellular location is the spindle. It is found in the spindle pole. The catalysed reaction is L-seryl-[protein] + ATP = O-phospho-L-seryl-[protein] + ADP + H(+). It catalyses the reaction L-threonyl-[protein] + ATP = O-phospho-L-threonyl-[protein] + ADP + H(+). In terms of biological role, phosphorylates specifically 'Ser-10' of histone H3 in vitro. Associates with cytoskeletal structures that are necessary for cytokinesis and with the microtubule spindle. Might colocalize with gamma-tubulin and function in microtubule organizing centers (MTOCs). This chain is Serine/threonine-protein kinase Aurora-2 (AUR2), found in Arabidopsis thaliana (Mouse-ear cress).